A 346-amino-acid polypeptide reads, in one-letter code: Histone H1.8 (346 aa).

Composition is skewed to low complexity over residues 1-23 (MAPGSVTSDISPSSTSTAGSSRS) and 38-48 (PGGPSHSSLPV). Disordered regions lie at residues 1-50 (MAPG…PVGR) and 121-346 (ATGS…RAEA). An H15 domain is found at 51-129 (RHPPVLRMVL…GATGSFKLVP (79 aa)). The segment covering 128–137 (VPKHKKKIQP) has biased composition (basic residues). A compositionally biased stretch (basic and acidic residues) spans 148–167 (RAGEAKGKGPKKPSEAKEDP). Positions 164–179 (KEDPPNVGKVKKAAKR) match the Nuclear localization signal motif. Residues 172-182 (KVKKAAKRPAK) show a composition bias toward basic residues. Basic and acidic residues-rich tracts occupy residues 205–225 (KDTRAQSGEARKVPPKPDKAM) and 251–262 (EAYRKTKAESKS). Basic residues predominate over residues 278-288 (TKKKVVAKAKA). Residues 298-309 (KAAAPAKGSGSK) show a composition bias toward low complexity. A compositionally biased stretch (polar residues) spans 334-346 (ASSSKVSSQRAEA).

The protein belongs to the histone H1/H5 family. As to expression, oocyte-specific.

Its subcellular location is the cytoplasm. It localises to the nucleus. The protein localises to the chromosome. Its function is as follows. May play a key role in the control of gene expression during oogenesis and early embryogenesis, presumably through the perturbation of chromatin structure. Essential for meiotic maturation of germinal vesicle-stage oocytes. The somatic type linker histone H1c is rapidly replaced by H1oo in a donor nucleus transplanted into an oocyte. The greater mobility of H1oo as compared to H1c may contribute to this rapid replacement and increased instability of the embryonic chromatin structure. The rapid replacement of H1c with H1oo may play an important role in nuclear remodeling. In Homo sapiens (Human), this protein is Histone H1.8.